Here is a 528-residue protein sequence, read N- to C-terminus: Peptide chain release factor 3 (528 aa).

Residues 10–278 (DRRRTFGIIS…AFVQMAPPPH (269 aa)) enclose the tr-type G domain. Residues 19–26 (SHPDAGKT), 87–91 (DTPGH), and 141–144 (NKLD) contribute to the GTP site.

It belongs to the TRAFAC class translation factor GTPase superfamily. Classic translation factor GTPase family. PrfC subfamily.

The protein resides in the cytoplasm. Its function is as follows. Increases the formation of ribosomal termination complexes and stimulates activities of RF-1 and RF-2. It binds guanine nucleotides and has strong preference for UGA stop codons. It may interact directly with the ribosome. The stimulation of RF-1 and RF-2 is significantly reduced by GTP and GDP, but not by GMP. This is Peptide chain release factor 3 from Syntrophobacter fumaroxidans (strain DSM 10017 / MPOB).